The primary structure comprises 1225 residues: Cohesin subunit SA-3 (1225 aa).

The disordered stretch occupies residues 1-97 (MSSPLQRAVG…HSRKQSEPPA (97 aa)). Over residues 15 to 26 (ALSASSSSSASL) the composition is skewed to low complexity. Over residues 45–54 (LADEDTDFED) the composition is skewed to acidic residues. 2 stretches are compositionally biased toward basic residues: residues 59 to 69 (NVKKRAAKRPP) and 76 to 90 (KHPKKGSRVVHRHSR). Residues 309–394 (FVHRYRDVLP…SRFKDRMVSM (86 aa)) enclose the SCD domain. Disordered stretches follow at residues 546–567 (SEGHPPVGRVTGRKGLTSKERK), 1063–1113 (AETS…STAV), and 1177–1225 (EEDE…IEDF). The segment covering 1078–1089 (VEGPAKPNREDV) has biased composition (basic and acidic residues). Low complexity predominate over residues 1090-1099 (SSSQEESLQL). Acidic residues predominate over residues 1177–1191 (EEDEEEELEIQDESN). The segment covering 1198-1209 (DMQASSYSSTSE) has biased composition (polar residues). At S1203 the chain carries Phosphoserine. Acidic residues predominate over residues 1216–1225 (DSTELDIEDF).

The protein belongs to the SCC3 family. In terms of assembly, component of the meiosis-specific cohesin complex, which also contains the SMC1 (SMC1A or SMC1B) and SMC3 heterodimer. Such complex likely contains RAD21, or the meiosis-specific related protein REC8. Interacts with CCDC79/TERB1; recruiting cohesin to telomeres to develop structural rigidity. Post-translationally, phosphorylated. Testis specific.

It localises to the nucleus. The protein localises to the chromosome. It is found in the centromere. Meiosis specific component of cohesin complex. The cohesin complex is required for the cohesion of sister chromatids after DNA replication. The cohesin complex apparently forms a large proteinaceous ring within which sister chromatids can be trapped. At anaphase, the complex is cleaved and dissociates from chromatin, allowing sister chromatids to segregate. The meiosis-specific cohesin complex probably replaces mitosis specific cohesin complex when it dissociates from chromatin during prophase I. The protein is Cohesin subunit SA-3 (STAG3) of Homo sapiens (Human).